Here is a 347-residue protein sequence, read N- to C-terminus: 3-isopropylmalate dehydrogenase (347 aa).

Gly-76–Glu-87 is an NAD(+) binding site. 4 residues coordinate substrate: Arg-94, Arg-104, Arg-132, and Asp-217. Residues Asp-217, Asp-241, and Asp-245 each coordinate Mg(2+). An NAD(+)-binding site is contributed by Gly-275–Asn-287.

The protein belongs to the isocitrate and isopropylmalate dehydrogenases family. LeuB type 1 subfamily. In terms of assembly, homodimer. The cofactor is Mg(2+). Requires Mn(2+) as cofactor.

It localises to the cytoplasm. The enzyme catalyses (2R,3S)-3-isopropylmalate + NAD(+) = 4-methyl-2-oxopentanoate + CO2 + NADH. The protein operates within amino-acid biosynthesis; L-leucine biosynthesis; L-leucine from 3-methyl-2-oxobutanoate: step 3/4. Functionally, catalyzes the oxidation of 3-carboxy-2-hydroxy-4-methylpentanoate (3-isopropylmalate) to 3-carboxy-4-methyl-2-oxopentanoate. The product decarboxylates to 4-methyl-2 oxopentanoate. The sequence is that of 3-isopropylmalate dehydrogenase from Staphylococcus epidermidis (strain ATCC 12228 / FDA PCI 1200).